Reading from the N-terminus, the 33-residue chain is Cytochrome b6-f complex subunit 8 (33 aa).

A helical membrane pass occupies residues 2 to 22; sequence IFTLGWASLAAIFTFSIAMVV.

The protein belongs to the PetN family. The 4 large subunits of the cytochrome b6-f complex are cytochrome b6, subunit IV (17 kDa polypeptide, PetD), cytochrome f and the Rieske protein, while the 4 small subunits are PetG, PetL, PetM and PetN. The complex functions as a dimer.

It localises to the cellular thylakoid membrane. In terms of biological role, component of the cytochrome b6-f complex, which mediates electron transfer between photosystem II (PSII) and photosystem I (PSI), cyclic electron flow around PSI, and state transitions. This Prochlorococcus marinus (strain NATL2A) protein is Cytochrome b6-f complex subunit 8.